Reading from the N-terminus, the 613-residue chain is Proline--tRNA ligase (613 aa).

The protein belongs to the class-II aminoacyl-tRNA synthetase family. ProS type 1 subfamily. Homodimer.

Its subcellular location is the cytoplasm. It carries out the reaction tRNA(Pro) + L-proline + ATP = L-prolyl-tRNA(Pro) + AMP + diphosphate. Catalyzes the attachment of proline to tRNA(Pro) in a two-step reaction: proline is first activated by ATP to form Pro-AMP and then transferred to the acceptor end of tRNA(Pro). As ProRS can inadvertently accommodate and process non-cognate amino acids such as alanine and cysteine, to avoid such errors it has two additional distinct editing activities against alanine. One activity is designated as 'pretransfer' editing and involves the tRNA(Pro)-independent hydrolysis of activated Ala-AMP. The other activity is designated 'posttransfer' editing and involves deacylation of mischarged Ala-tRNA(Pro). The misacylated Cys-tRNA(Pro) is not edited by ProRS. This Cyanothece sp. (strain PCC 7425 / ATCC 29141) protein is Proline--tRNA ligase.